The chain runs to 542 residues: Importin subunit alpha-1 (542 aa).

The interval 1-29 is disordered; the sequence is MSASSRFIPEHRRQNYKGKGTFQADELRR. In terms of domain architecture, IBB spans 1 to 60; sequence MSASSRFIPEHRRQNYKGKGTFQADELRRRRETQQIEIRKQKREENLNKRRNLVDVQEPA. 8 ARM repeats span residues 114–155, 156–197, 198–240, 241–282, 283–324, 325–366, 367–408, and 409–453; these read IQKV…SSNQ, THVV…SPMC, RDHV…KNPQ, PDWN…ANEK, IQAI…DDVQ, TQVI…NSSQ, IQYV…GARR, and PDQI…GELD.

It belongs to the importin alpha family. As to quaternary structure, interacts with pap1.

It localises to the nucleus. Functionally, binds specifically and directly to substrates containing either a simple or bipartite NLS motif. Promotes docking of import substrates to the nuclear envelope. Seems to act as a cytosolic receptor for both simple and bipartite NLS motifs. Has an essential role in mitotic chromosome condensation. Involved in nuclear protein import. Required for efficient nuclear import of both an SV40 nuclear localization signal-containing reporter protein and the pap1 component of the stress response MAP kinase pathway. Required for proper mitotic progression. This Schizosaccharomyces pombe (strain 972 / ATCC 24843) (Fission yeast) protein is Importin subunit alpha-1 (cut15).